A 341-amino-acid chain; its full sequence is Serpentine receptor class beta-1 (341 aa).

Helical transmembrane passes span 22-42 (AQFW…IFLL), 66-86 (FLFA…PLFI), 102-122 (GQLS…GFSI), 141-161 (LGPL…FTVF), 188-208 (CWIL…ILLV), 240-260 (LIVS…TIFI), and 279-299 (GVYI…IKAL).

Belongs to the nematode receptor-like protein srb family.

It is found in the membrane. The polypeptide is Serpentine receptor class beta-1 (srb-1) (Caenorhabditis elegans).